A 214-amino-acid chain; its full sequence is MSKPPPKPVKPGQVKVFRALYTFEPRTPDELYFEEGDIIYITDMSDTNWWKGTCKGRTGLIPSNYVAEQAESIDNPLHEAAKRGNLSWLRECLDNRVGVNGLDKAGSTALYWACHGGHRDIVEMLFTQPNIELNQQNKLGDTALHAAAWKGYADIVQLLLEKGARTDLRNNEKKLALDMATNAACASLLKKKQGTDAVRSLSNAEDYLDDEDSD.

Serine 2 carries the post-translational modification N-acetylserine. The SH3 domain occupies 12–71 (GQVKVFRALYTFEPRTPDELYFEEGDIIYITDMSDTNWWKGTCKGRTGLIPSNYVAEQAE). ANK repeat units follow at residues 72-101 (SIDN…GVNG), 105-135 (AGST…ELNQ), and 139-168 (LGDT…RTDL). 2 positions are modified to phosphoserine: serine 202 and serine 213.

In terms of assembly, interacts with SRC and SMN1. Interacts with FASLG.

The protein resides in the cytoplasm. Functionally, induces bone resorption, acting probably through a signaling cascade which results in the secretion of factor(s) enhancing osteoclast formation and activity. The sequence is that of Osteoclast-stimulating factor 1 (OSTF1) from Bos taurus (Bovine).